The sequence spans 711 residues: Ribosomal RNA large subunit methyltransferase K/L (711 aa).

Residues 43 to 154 (LAYRITLWTR…NGVITIAMNF (112 aa)) enclose the THUMP domain.

Belongs to the methyltransferase superfamily. RlmKL family.

The protein localises to the cytoplasm. It catalyses the reaction guanosine(2445) in 23S rRNA + S-adenosyl-L-methionine = N(2)-methylguanosine(2445) in 23S rRNA + S-adenosyl-L-homocysteine + H(+). It carries out the reaction guanosine(2069) in 23S rRNA + S-adenosyl-L-methionine = N(2)-methylguanosine(2069) in 23S rRNA + S-adenosyl-L-homocysteine + H(+). Specifically methylates the guanine in position 2445 (m2G2445) and the guanine in position 2069 (m7G2069) of 23S rRNA. The protein is Ribosomal RNA large subunit methyltransferase K/L of Shewanella oneidensis (strain ATCC 700550 / JCM 31522 / CIP 106686 / LMG 19005 / NCIMB 14063 / MR-1).